The primary structure comprises 86 residues: U15-lycotoxin-Ls1d (86 aa).

Positions 1-20 (MNSKIFAVLLLLAFLSCVLS) are cleaved as a signal peptide. The region spanning 21-66 (DQYCPKSSITACKKMNIRNDCCKDDDCTGGSWCCATPCGNFCKYPT) is the WAP domain. Cystine bridges form between C24-C54, C32-C58, C41-C53, C42-C80, and C47-C62.

It belongs to the venom protein 11 family. 01 (wap-1) subfamily. In terms of processing, contains 5 disulfide bonds. Expressed by the venom gland.

Its subcellular location is the secreted. In terms of biological role, has antibacterial activity. The protein is U15-lycotoxin-Ls1d of Lycosa singoriensis (Wolf spider).